The chain runs to 216 residues: uncharacterized protein (216 aa).

Gly-56 and Glu-77 together coordinate S-adenosyl-L-methionine.

Belongs to the methyltransferase superfamily. YrrT family.

Could be a S-adenosyl-L-methionine-dependent methyltransferase. This is an uncharacterized protein from Alkaliphilus oremlandii (strain OhILAs) (Clostridium oremlandii (strain OhILAs)).